A 590-amino-acid chain; its full sequence is Leucine-rich repeat transmembrane neuronal protein 4 (590 aa).

An N-terminal signal peptide occupies residues 1–30 (MGFRLITQLKGMSVLLVLFPTLLLVMLTGA). The 29-residue stretch at 31–59 (QRACPKNCRCDGKIVYCESHAFADIPENI) folds into the LRRNT domain. Over 31–424 (QRACPKNCRC…HEYEHVSFHK (394 aa)) the chain is Extracellular. An N-linked (GlcNAc...) asparagine glycan is attached at Asn-58. 10 LRR repeats span residues 60-83 (SGGS…QFAG), 84-107 (LNQL…AFQG), 108-131 (IRRL…TFHP), 132-155 (VPNL…QFKG), 157-179 (RKLI…VFQD), 180-203 (CRNL…AFAG), 205-227 (LKLK…HFPR), 228-251 (LFNL…LTWT), 252-275 (WSSL…TFKC), and 276-299 (LPNL…TVNA). Asn-126 carries an N-linked (GlcNAc...) asparagine glycan. Asn-291 carries N-linked (GlcNAc...) asparagine glycosylation. The LRRCT domain maps to 311 to 362 (NMWECSRSICPLFYWLKNFKGNKESTMICAGPKHIQGEKVSDAVETYNICSD). A helical membrane pass occupies residues 425 to 445 (IIAGSVALFLSVAMILLVIYV). The Cytoplasmic segment spans residues 446–590 (SWKRYPASMK…PAIYLERITN (145 aa)).

Belongs to the LRRTM family. In terms of assembly, peripherally associated with AMPAR complex. AMPAR complex consists of an inner core made of 4 pore-forming GluA/GRIA proteins (GRIA1, GRIA2, GRIA3 and GRIA4) and 4 major auxiliary subunits arranged in a twofold symmetry. One of the two pairs of distinct binding sites is occupied either by CNIH2, CNIH3 or CACNG2, CACNG3. The other harbors CACNG2, CACNG3, CACNG4, CACNG8 or GSG1L. This inner core of AMPAR complex is complemented by outer core constituents binding directly to the GluA/GRIA proteins at sites distinct from the interaction sites of the inner core constituents. Outer core constituents include at least PRRT1, PRRT2, CKAMP44/SHISA9, FRRS1L and NRN1. The proteins of the inner and outer core serve as a platform for other, more peripherally associated AMPAR constituents, including LRRTM4. Alone or in combination, these auxiliary subunits control the gating and pharmacology of the AMPAR complex and profoundly impact their biogenesis and protein processing. As to expression, expressed in the brain (at protein level).

It localises to the cell membrane. The protein localises to the postsynaptic cell membrane. Functionally, may play a role in the development and maintenance of the nervous system. Exhibits strong synaptogenic activity, restricted to excitatory presynaptic differentiation. The protein is Leucine-rich repeat transmembrane neuronal protein 4 (Lrrtm4) of Rattus norvegicus (Rat).